We begin with the raw amino-acid sequence, 217 residues long: Adenylate kinase (217 aa).

10–15 is an ATP binding site; it reads GAGKGT. The interval 30–59 is NMP; that stretch reads STGDMLRAAVKAGSPLGVKVKDIMASGQLV. Residues Thr31, Arg36, 57-59, 85-88, and Gln92 each bind AMP; these read QLV and GFPR. Residues 122 to 159 form an LID region; that stretch reads GRRVHEASGRIYHVTHNPPKTEGVDDITGEPLVQRDDD. Residues Arg123 and 132-133 contribute to the ATP site; that span reads IY. Residues Arg156 and Arg167 each contribute to the AMP site. Residue Gly202 coordinates ATP.

Belongs to the adenylate kinase family. Monomer.

Its subcellular location is the cytoplasm. It catalyses the reaction AMP + ATP = 2 ADP. It functions in the pathway purine metabolism; AMP biosynthesis via salvage pathway; AMP from ADP: step 1/1. In terms of biological role, catalyzes the reversible transfer of the terminal phosphate group between ATP and AMP. Plays an important role in cellular energy homeostasis and in adenine nucleotide metabolism. The polypeptide is Adenylate kinase (Teredinibacter turnerae (strain ATCC 39867 / T7901)).